The primary structure comprises 110 residues: Endoribonuclease SymE (110 aa).

One can recognise a SpoVT-AbrB domain in the interval 29-74; it reads SRYPDYTRIPALTMKGQWLEAAGFATGTEVDVRVMNGCIVLTAQQP.

Belongs to the SymE family.

It localises to the cytoplasm. Involved in the degradation and recycling of damaged RNA. It is itself a target for degradation by the ATP-dependent protease Lon. This is Endoribonuclease SymE from Salmonella heidelberg (strain SL476).